Here is a 104-residue protein sequence, read N- to C-terminus: Integration host factor subunit beta (104 aa).

Belongs to the bacterial histone-like protein family. As to quaternary structure, heterodimer of an alpha and a beta chain.

Functionally, this protein is one of the two subunits of integration host factor, a specific DNA-binding protein that functions in genetic recombination as well as in transcriptional and translational control. This chain is Integration host factor subunit beta (ihfB), found in Xylella fastidiosa (strain 9a5c).